The following is a 237-amino-acid chain: Uridylate kinase (237 aa).

Position 12–15 (lysine 12–glycine 15) interacts with ATP. Glycine 53 serves as a coordination point for UMP. ATP contacts are provided by glycine 54 and arginine 58. Residues aspartate 73 and threonine 134–threonine 141 contribute to the UMP site. Threonine 161, tyrosine 167, and aspartate 170 together coordinate ATP.

This sequence belongs to the UMP kinase family. In terms of assembly, homohexamer.

It localises to the cytoplasm. The catalysed reaction is UMP + ATP = UDP + ADP. The protein operates within pyrimidine metabolism; CTP biosynthesis via de novo pathway; UDP from UMP (UMPK route): step 1/1. Its activity is regulated as follows. Inhibited by UTP. Catalyzes the reversible phosphorylation of UMP to UDP. This is Uridylate kinase from Rhizorhabdus wittichii (strain DSM 6014 / CCUG 31198 / JCM 15750 / NBRC 105917 / EY 4224 / RW1) (Sphingomonas wittichii).